The chain runs to 266 residues: Putative peptidyl-prolyl cis-trans isomerase NifM (266 aa).

The 98-residue stretch at 124-221 (PEQRLTRHLL…LGWHLLWCEA (98 aa)) folds into the PpiC domain.

It belongs to the PpiC/parvulin rotamase family.

The catalysed reaction is [protein]-peptidylproline (omega=180) = [protein]-peptidylproline (omega=0). Functionally, required for the activation and stabilization of the iron-component (NifH) of nitrogenase. Probable PPIase. The sequence is that of Putative peptidyl-prolyl cis-trans isomerase NifM (nifM) from Klebsiella oxytoca.